The following is a 423-amino-acid chain: Serine--tRNA ligase (423 aa).

230-232 lines the L-serine pocket; it reads TAE. Position 261–263 (261–263) interacts with ATP; that stretch reads RSE. Glu-284 lines the L-serine pocket. 348-351 contributes to the ATP binding site; it reads EISS. Ser-383 serves as a coordination point for L-serine.

It belongs to the class-II aminoacyl-tRNA synthetase family. Type-1 seryl-tRNA synthetase subfamily. Homodimer. The tRNA molecule binds across the dimer.

Its subcellular location is the cytoplasm. It catalyses the reaction tRNA(Ser) + L-serine + ATP = L-seryl-tRNA(Ser) + AMP + diphosphate + H(+). The catalysed reaction is tRNA(Sec) + L-serine + ATP = L-seryl-tRNA(Sec) + AMP + diphosphate + H(+). The protein operates within aminoacyl-tRNA biosynthesis; selenocysteinyl-tRNA(Sec) biosynthesis; L-seryl-tRNA(Sec) from L-serine and tRNA(Sec): step 1/1. Functionally, catalyzes the attachment of serine to tRNA(Ser). Is also able to aminoacylate tRNA(Sec) with serine, to form the misacylated tRNA L-seryl-tRNA(Sec), which will be further converted into selenocysteinyl-tRNA(Sec). This is Serine--tRNA ligase from Levilactobacillus brevis (strain ATCC 367 / BCRC 12310 / CIP 105137 / JCM 1170 / LMG 11437 / NCIMB 947 / NCTC 947) (Lactobacillus brevis).